Consider the following 536-residue polypeptide: MFS-type efflux pump MFS1 (536 aa).

Transmembrane regions (helical) follow at residues 30–50 (VTGL…LLVA), 80–100 (YLLT…FFPV), and 102–122 (WVFL…GAAP). N-linked (GlcNAc...) asparagine glycosylation is present at Asn123. 3 consecutive transmembrane segments (helical) span residues 133 to 153 (VAGI…AYSI), 163 to 183 (GAIG…GGAF), and 191 to 211 (WCFY…LIFL). The N-linked (GlcNAc...) asparagine glycan is linked to Asn221. A run of 8 helical transmembrane segments spans residues 234–254 (IGTA…QWGG), 264–284 (IIAL…FQIR), 306–326 (FFLF…PIWF), 342–362 (IPMV…VTAI), 366–386 (APLY…LTTF), 400–420 (IIFG…AQAV), 426–446 (VAVG…LFVS), and 503–523 (TWYV…GMEW).

The protein belongs to the major facilitator superfamily. TCR/Tet family.

Its subcellular location is the cell membrane. Its function is as follows. MFS-type efflux pump involved in the modulation susceptibility to azoles, including fluconazole, itraconazole, ketoconazole, miconazole and voriconazole. Confers also increased resistance chloramphenicol and thiamphenicol, suggesting that it acts as a pleiotropic drug transporter with a broad substrate spectrum. Finally, increases the tolerance to cycloheximide when expressed in S.cerevisiae, but not in dermatophyte species. The sequence is that of MFS-type efflux pump MFS1 from Trichophyton rubrum (strain ATCC MYA-4607 / CBS 118892) (Athlete's foot fungus).